Consider the following 424-residue polypeptide: Elongation factor 1-alpha (424 aa).

Residues 5–223 (KPHLNLITIG…DAFKVPEKPI (219 aa)) form the tr-type G domain. The tract at residues 14 to 21 (GHVDHGKS) is G1. 14-21 (GHVDHGKS) is a GTP binding site. Residue Ser-21 coordinates Mg(2+). Residues 70-74 (GVTID) form a G2 region. Residues 91–94 (DAPG) form a G3 region. Residues 91-95 (DAPGH) and 148-151 (NKMD) each bind GTP. Residues 148–151 (NKMD) are G4. The interval 187 to 189 (SGY) is G5.

It belongs to the TRAFAC class translation factor GTPase superfamily. Classic translation factor GTPase family. EF-Tu/EF-1A subfamily.

It is found in the cytoplasm. It carries out the reaction GTP + H2O = GDP + phosphate + H(+). In terms of biological role, GTP hydrolase that promotes the GTP-dependent binding of aminoacyl-tRNA to the A-site of ribosomes during protein biosynthesis. The protein is Elongation factor 1-alpha of Thermoplasma acidophilum (strain ATCC 25905 / DSM 1728 / JCM 9062 / NBRC 15155 / AMRC-C165).